Reading from the N-terminus, the 517-residue chain is Superoxide-generating NADPH oxidase heavy chain subunit A (517 aa).

At 1 to 19 the chain is on the cytoplasmic side; that stretch reads MRLPTKEEIQRYWVNEGNK. The chain crosses the membrane as a helical span at residues 20–40; sequence LILVILYTLGNIAAFVYTFVH. Residues 41–62 are Extracellular-facing; that stretch reads YYNSPAFEVVGYGVCFARGCAQ. The Ferric oxidoreductase domain occupies 58–201; that stretch reads RGCAQLLKLN…LFVVFFGLLV (144 aa). Residues 63–83 form a helical membrane-spanning segment; that stretch reads LLKLNCALILVPVLRNLLSFL. At 84–97 the chain is on the cytoplasmic side; sequence RGTFLNNYVPFDKN. The helical transmembrane segment at 98–118 threads the bilayer; that stretch reads IVFHKLIAWVICFATFGHVMA. Heme contacts are provided by His101 and His115. Topologically, residues 119–149 are extracellular; that stretch reads HFNNFRLYQDITPQEYKRILGIDYPNLTPIK. Residues 150–170 traverse the membrane as a helical segment; it reads YAFATLAGWTGHVVCIVMVLM. The Cytoplasmic portion of the chain corresponds to 171–184; sequence YTSAVESIRRPMFE. The helical transmembrane segment at 185 to 205 threads the bilayer; it reads GFWYTHHLFVVFFGLLVVHGL. Residues His190 and His203 each contribute to the heme site. Position 206 (His206) is a topological domain, extracellular. Residues 207–227 form a helical membrane-spanning segment; sequence SILEPTSFWKWVIGPCALYIV. Over 228-517 the chain is Cytoplasmic; the sequence is ERLIRLLRSK…CRFHYNKENF (290 aa). The 121-residue stretch at 229–349 folds into the FAD-binding FR-type domain; that stretch reads RLIRLLRSKK…DGPFGAASEE (121 aa). 283-289 lines the FAD pocket; it reads HPFTITS.

Composed of a heavy chain and a light chain. FAD is required as a cofactor.

It localises to the membrane. Critical component of the membrane-bound oxidase that generates superoxide. It is the terminal component of a respiratory chain that transfers single electrons from cytoplasmic NADPH across the plasma membrane to molecular oxygen on the exterior. This Dictyostelium discoideum (Social amoeba) protein is Superoxide-generating NADPH oxidase heavy chain subunit A (noxA).